Consider the following 222-residue polypeptide: 3-dehydroquinate dehydratase (222 aa).

3-dehydroquinate-binding positions include 29 to 31 (ELR) and Arg-55. Catalysis depends on His-112, which acts as the Proton donor/acceptor. Lys-139 serves as the catalytic Schiff-base intermediate with substrate. Residues Arg-178, Ser-199, and Gln-203 each contribute to the 3-dehydroquinate site.

This sequence belongs to the type-I 3-dehydroquinase family. Homodimer.

The catalysed reaction is 3-dehydroquinate = 3-dehydroshikimate + H2O. It participates in metabolic intermediate biosynthesis; chorismate biosynthesis; chorismate from D-erythrose 4-phosphate and phosphoenolpyruvate: step 3/7. Its function is as follows. Involved in the third step of the chorismate pathway, which leads to the biosynthesis of aromatic amino acids. Catalyzes the cis-dehydration of 3-dehydroquinate (DHQ) and introduces the first double bond of the aromatic ring to yield 3-dehydroshikimate. This Dehalococcoides mccartyi (strain ATCC BAA-2266 / KCTC 15142 / 195) (Dehalococcoides ethenogenes (strain 195)) protein is 3-dehydroquinate dehydratase.